The primary structure comprises 600 residues: Elongation factor 4 (600 aa).

A tr-type G domain is found at 5–187 (KYIRNFSIIA…AIINKLPSPK (183 aa)). GTP is bound by residues 17-22 (DHGKST) and 134-137 (NKID).

The protein belongs to the TRAFAC class translation factor GTPase superfamily. Classic translation factor GTPase family. LepA subfamily.

It localises to the cell inner membrane. The enzyme catalyses GTP + H2O = GDP + phosphate + H(+). Functionally, required for accurate and efficient protein synthesis under certain stress conditions. May act as a fidelity factor of the translation reaction, by catalyzing a one-codon backward translocation of tRNAs on improperly translocated ribosomes. Back-translocation proceeds from a post-translocation (POST) complex to a pre-translocation (PRE) complex, thus giving elongation factor G a second chance to translocate the tRNAs correctly. Binds to ribosomes in a GTP-dependent manner. The protein is Elongation factor 4 of Rickettsia typhi (strain ATCC VR-144 / Wilmington).